A 401-amino-acid polypeptide reads, in one-letter code: L-rhamnonate dehydratase (401 aa).

The substrate site is built by H29 and R55. 3 residues coordinate Mg(2+): D222, E248, and E276. Catalysis depends on H325, which acts as the Proton acceptor. Substrate is bound at residue E345.

Belongs to the mandelate racemase/muconate lactonizing enzyme family. RhamD subfamily. As to quaternary structure, homooctamer; tetramer of dimers. Requires Mg(2+) as cofactor.

The enzyme catalyses L-rhamnonate = 2-dehydro-3-deoxy-L-rhamnonate + H2O. Functionally, catalyzes the dehydration of L-rhamnonate to 2-keto-3-deoxy-L-rhamnonate (KDR). The chain is L-rhamnonate dehydratase from Salmonella heidelberg (strain SL476).